An 83-amino-acid chain; its full sequence is Disintegrin isoform D-2 (83 aa).

The Disintegrin domain maps to 2–83 (PPVCGNELLE…GKSSDCPWNH (82 aa)). Disulfide bonds link cysteine 5–cysteine 24, cysteine 16–cysteine 34, cysteine 18–cysteine 29, cysteine 28–cysteine 51, cysteine 42–cysteine 48, cysteine 47–cysteine 72, and cysteine 60–cysteine 79. Positions 64 to 66 (RGD) match the Cell attachment site motif.

This sequence belongs to the venom metalloproteinase (M12B) family. P-II subfamily. P-IIa sub-subfamily. In terms of assembly, monomer (disintegrin). Expressed by the venom gland.

It localises to the secreted. In terms of biological role, inhibits fibrinogen interaction with platelets. Acts by binding to the alpha-IIb/beta-3 (ITGA2B/ITGB3) on the platelet surface and inhibits aggregation induced by ADP, thrombin, platelet-activating factor and collagen. This chain is Disintegrin isoform D-2, found in Bitis arietans (African puff adder).